The chain runs to 220 residues: 7-cyano-7-deazaguanine synthase (220 aa).

Position 10–20 (10–20) interacts with ATP; it reads FSGGQDSTTCL. Residues Cys-188, Cys-197, Cys-200, and Cys-203 each coordinate Zn(2+).

This sequence belongs to the QueC family. It depends on Zn(2+) as a cofactor.

It catalyses the reaction 7-carboxy-7-deazaguanine + NH4(+) + ATP = 7-cyano-7-deazaguanine + ADP + phosphate + H2O + H(+). It functions in the pathway purine metabolism; 7-cyano-7-deazaguanine biosynthesis. Catalyzes the ATP-dependent conversion of 7-carboxy-7-deazaguanine (CDG) to 7-cyano-7-deazaguanine (preQ(0)). The chain is 7-cyano-7-deazaguanine synthase from Neisseria meningitidis serogroup C (strain 053442).